Reading from the N-terminus, the 783-residue chain is LPS-assembly protein LptD (783 aa).

Residues 1 to 24 (MKKNYYSLISFSIFTALYSTAGFA) form the signal peptide.

Belongs to the LptD family. In terms of assembly, component of the lipopolysaccharide transport and assembly complex. Interacts with LptE and LptA.

The protein resides in the cell outer membrane. Functionally, together with LptE, is involved in the assembly of lipopolysaccharide (LPS) at the surface of the outer membrane. This is LPS-assembly protein LptD from Mannheimia succiniciproducens (strain KCTC 0769BP / MBEL55E).